Here is an 873-residue protein sequence, read N- to C-terminus: F-BAR domain only protein 1 (873 aa).

Residues 1 to 248 (MSYFGEHFWG…NVENVTVDML (248 aa)) enclose the F-BAR domain. Residues 1-275 (MSYFGEHFWG…LDFDAYSSAA (275 aa)) form a mediates membrane-binding region. Residues 153-172 (RENTSQKEMDKAETKSKKAA) are disordered. The stretch at 155–178 (NTSQKEMDKAETKSKKAADSLRRS) forms a coiled coil. The tract at residues 267-439 (DFDAYSSAAL…KSLFGPPLES (173 aa)) is mediates interaction with the adaptor protein complex AP-2. Phosphoserine occurs at positions 295, 343, and 368. The segment at 302–347 (SVDFLESDSGVPPEVDDEGFTVRPDISQNNGAEPPRFSSSDSDFDD) is disordered. Disordered stretches follow at residues 381-600 (GSLI…RGPS) and 813-833 (SGHLSASWQPQSGPSTPSPVA). Low complexity predominate over residues 447–466 (TGSSSLGFTSSPSPFSSSSP). At Ser-518 the chain carries Phosphoserine. The span at 567–576 (SLSPSPLGSS) shows a compositional bias: low complexity. Residues 593-873 (HGISRGPSPV…FATGMYLVSC (281 aa)) are mediates interaction with AGFG1, CALM, DAB2, EPS15, EPS15R, ITSN1 and clathrin. At Ser-600 the chain carries Phosphoserine. One can recognise an MHD domain in the interval 609–872 (ALPVATAFTE…RFATGMYLVS (264 aa)). Residues 816 to 827 (LSASWQPQSGPS) show a composition bias toward polar residues.

This sequence belongs to the FCHO family. As to quaternary structure, may oligomerize and form homotetramer. Interacts with AP2A2 and AP2B1; 2 subunits of the adaptor protein complex AP-2. Interacts with DAB2. Interacts with clathrin (CLTC or CLTCL1). Interacts with EPS15, EPS15R and ITSN1. Interacts with AGFG1 and CALM. May interact with ACVR1; linking this receptor to clathrin-mediated endocytosis. Mainly detected in brain and spleen.

The protein resides in the membrane. The protein localises to the clathrin-coated pit. Functionally, functions in an early step of clathrin-mediated endocytosis. Has both a membrane binding/bending activity and the ability to recruit proteins essential to the formation of functional clathrin-coated pits. May regulate Bmp signaling by regulating clathrin-mediated endocytosis of Bmp receptors. Involved in the regulation of T-cell poliferation and activation. Affects TCR clustering upon receptor triggering and modulates its internalisation, playing a role in TCR-dependent T-cell activation. The chain is F-BAR domain only protein 1 from Mus musculus (Mouse).